A 435-amino-acid chain; its full sequence is Enolase (435 aa).

Q163 lines the (2R)-2-phosphoglycerate pocket. The Proton donor role is filled by E205. Positions 243, 292, and 319 each coordinate Mg(2+). (2R)-2-phosphoglycerate contacts are provided by K344, R373, S374, and K395. The active-site Proton acceptor is K344.

It belongs to the enolase family. Requires Mg(2+) as cofactor.

It is found in the cytoplasm. The protein localises to the secreted. The protein resides in the cell surface. It catalyses the reaction (2R)-2-phosphoglycerate = phosphoenolpyruvate + H2O. It functions in the pathway carbohydrate degradation; glycolysis; pyruvate from D-glyceraldehyde 3-phosphate: step 4/5. Functionally, catalyzes the reversible conversion of 2-phosphoglycerate (2-PG) into phosphoenolpyruvate (PEP). It is essential for the degradation of carbohydrates via glycolysis. The chain is Enolase from Streptococcus equi subsp. zooepidemicus (strain MGCS10565).